A 136-amino-acid polypeptide reads, in one-letter code: Transmembrane protein 203 (136 aa).

4 helical membrane-spanning segments follow: residues 14-34, 50-72, 81-101, and 112-132; these read FAQLEIFLHIWALLVFTVLLA, FIPFFTADGLSTYFTTIVTVRLF, VLRLFWILTILSLKFVFEMLL, and LWFGLIMSPVFILLQLLMIRA.

The protein localises to the endoplasmic reticulum membrane. It localises to the endoplasmic reticulum-Golgi intermediate compartment. Involved in the regulation of cellular calcium homeotasis. May act as a regulator of STING-mediated inflammatory signaling in macrophages. This is Transmembrane protein 203 (tmem203) from Xenopus tropicalis (Western clawed frog).